The sequence spans 305 residues: MAYTPGSRGGRGGSRGGRGGFNGGRGGFGGGRGGARGGGRGGARGGRGGRGGARGGRGGSSGGRGGAKGGAKVIIEPHRHAGVFIARGKEDLLVTRNLVPGESVYNEKRISVDSPDGTKVEYRVWNPFRSKLAAGILGGLDNIYIKPGARVLYLGAANGTSVSHVADVVGPEGLVYAVEFSHRSGRDLLNMAKKRTNVIPIVEDARHVQKYRMLVGMVDVVFADVAQPDQARIVALNAAAFLKNEGGVVISVKASCIDSTADAAVVFAREVKKMQEEKIKPQEQLTLEPYERDHCIIVGKYLRHQ.

The segment at 1–70 (MAYTPGSRGG…SGGRGGAKGG (70 aa)) is disordered. A compositionally biased stretch (gly residues) spans 7-69 (SRGGRGGSRG…SSGGRGGAKG (63 aa)). Serine 111 and serine 114 each carry phosphoserine. Residues 160-161 (TS), 179-180 (EF), 204-205 (DA), and 224-227 (DVAQ) each bind S-adenosyl-L-methionine.

Belongs to the methyltransferase superfamily. Fibrillarin family. In terms of assembly, component of box C/D small nucleolar ribonucleoprotein (snoRNP) particles. In terms of processing, by homology to other fibrillarins, some or all of the N-terminal domain arginines are modified to asymmetric dimethylarginine (DMA).

Its subcellular location is the nucleus. It is found in the nucleolus. The catalysed reaction is L-glutaminyl-[histone H2A] + S-adenosyl-L-methionine = N(5)-methyl-L-glutaminyl-[histone H2A] + S-adenosyl-L-homocysteine + H(+). Its function is as follows. S-adenosyl-L-methionine-dependent methyltransferase that has the ability to methylate both RNAs and proteins. Involved in pre-rRNA processing by catalyzing the site-specific 2'-hydroxyl methylation of ribose moieties in pre-ribosomal RNA. Site specificity is provided by a guide RNA that base pairs with the substrate. Methylation occurs at a characteristic distance from the sequence involved in base pairing with the guide RNA. Also acts as a protein methyltransferase by mediating methylation of 'Gln-105' of histone H2A (H2AQ105me), a modification that impairs binding of the FACT complex and is specifically present at 35S ribosomal DNA locus. This Schizosaccharomyces pombe (strain 972 / ATCC 24843) (Fission yeast) protein is rRNA 2'-O-methyltransferase fibrillarin (fib1).